Here is a 36-residue protein sequence, read N- to C-terminus: Asteropin-A (36 aa).

Intrachain disulfides connect Cys2–Cys18, Cys9–Cys25, and Cys17–Cys35.

Its function is as follows. Sialidase inhibitor. Competitively inhibits bacterial sialidases, but not viral sialidases. Does not inhibit glycosidases or proteases. Has no antitumor activity. The protein is Asteropin-A of Asteropus simplex (Marine sponge).